Here is a 946-residue protein sequence, read N- to C-terminus: Protein RRC1 (946 aa).

Disordered regions lie at residues 1-29 (MSSF…KAED) and 41-183 (SFQG…NLYV). Composition is skewed to basic and acidic residues over residues 15-29 (KHRE…KAED), 62-75 (DKPK…KSKD), and 98-147 (KGKE…DRQG). The region spanning 179–260 (TNLYVGNLSP…YELKIGWGKA (82 aa)) is the RRM domain. Residues 329-372 (VIDTLALYVLDGECAFEQAIMERGRGNPLFKFMFELGSKEHTYY) form an SURP motif repeat. The 146-residue stretch at 437–582 (LTDPQRDEFE…GLRSTFLRSG (146 aa)) folds into the CID domain. One can recognise an SAP domain in the interval 631–665 (LMNLPIAELERRCRHNGLSLVGGRVMMVTRLLSLE). 2 disordered regions span residues 740–797 (ASKW…EQRQ) and 836–946 (EVDY…RGTR). The segment covering 757–767 (SSSSGSDNTGG) has biased composition (polar residues). Composition is skewed to basic and acidic residues over residues 772–781 (ADGEDLKGND), 854–868 (IIER…QESS), and 886–946 (STRE…RGTR).

Component of the SWAP1-SFPS-RRC1 splicing factor complex which modulates pre-mRNA splicing to promote photomorphogenesis. Interacts with SWAP1 in a light-independent manner. Expressed in leaves, inflorescence stems, roots, flower buds, open flowers and siliques.

It is found in the nucleus speckle. Its function is as follows. As a member of the SWAP1-SFPS-RRC1 splicing factor complex, modulates photomorphogenesis by regulating the gene expression and pre-messenger RNA (mRNA) alternative splicing of a large number of genes, including those involved in plant responses to light signaling. SR-like splicing factor required for phytochrome B (phyB) signal transduction and involved in phyB-dependent alternative splicing. The sequence is that of Protein RRC1 from Arabidopsis thaliana (Mouse-ear cress).